A 403-amino-acid polypeptide reads, in one-letter code: Glucose/galactose-binding lipoprotein (403 aa).

An N-terminal signal peptide occupies residues 1–25; that stretch reads MKENSCTACSRRLALFVGAAVLVVG. C26 carries N-palmitoyl cysteine lipidation. A lipid anchor (S-diacylglycerol cysteine) is attached at C26.

The protein belongs to the bacterial solute-binding protein 2 family.

The protein localises to the cell membrane. In terms of biological role, may be involved in the transport of sugars. May have a role in chemotaxis. In Treponema pallidum (strain Nichols), this protein is Glucose/galactose-binding lipoprotein (mglB).